A 462-amino-acid chain; its full sequence is Cysteine--tRNA ligase (462 aa).

Cys-28 contacts Zn(2+). A 'HIGH' region motif is present at residues 30–40 (MTVYDYCHIGH). The Zn(2+) site is built by Cys-209, His-234, and Glu-238. A 'KMSKS' region motif is present at residues 266–270 (KMSKS). Residue Lys-269 participates in ATP binding.

Belongs to the class-I aminoacyl-tRNA synthetase family. As to quaternary structure, monomer. Zn(2+) serves as cofactor.

The protein localises to the cytoplasm. It catalyses the reaction tRNA(Cys) + L-cysteine + ATP = L-cysteinyl-tRNA(Cys) + AMP + diphosphate. In Pseudomonas fluorescens (strain SBW25), this protein is Cysteine--tRNA ligase.